A 532-amino-acid polypeptide reads, in one-letter code: Fatty-acid amide hydrolase 2-A (532 aa).

Residues Phe-9–Ala-29 form a helical membrane-spanning segment. Residues Lys-129 and Ser-204 each act as charge relay system in the active site. Ser-228 acts as the Acyl-ester intermediate in catalysis.

This sequence belongs to the amidase family.

It is found in the membrane. It catalyses the reaction N-(5Z,8Z,11Z,14Z-eicosatetraenoyl)-ethanolamine + H2O = ethanolamine + (5Z,8Z,11Z,14Z)-eicosatetraenoate. The catalysed reaction is (9Z)-octadecenamide + H2O = (9Z)-octadecenoate + NH4(+). This is Fatty-acid amide hydrolase 2-A (faah2a) from Danio rerio (Zebrafish).